The following is a 162-amino-acid chain: MIFYTVLVLMFLGSTLVFYSLSPYYGALGLVLVALSGCLLCSLLGFSFIALVLILIYVGGMLVVFVYSTAISAERYPSVSNFNEILVLSSLVISWGVLNFDPLINVEVNSWGFVTNSDLVGASNLYSSMGGYLLIGGYILLVALVVALVLTYGSDYSILKAL.

Helical transmembrane passes span 1–21 (MIFY…FYSL), 46–66 (FSFI…VVFV), 84–104 (EILV…DPLI), and 130–150 (GGYL…ALVL).

It belongs to the complex I subunit 6 family.

It localises to the mitochondrion membrane. The enzyme catalyses a ubiquinone + NADH + 5 H(+)(in) = a ubiquinol + NAD(+) + 4 H(+)(out). Functionally, core subunit of the mitochondrial membrane respiratory chain NADH dehydrogenase (Complex I) that is believed to belong to the minimal assembly required for catalysis. Complex I functions in the transfer of electrons from NADH to the respiratory chain. The immediate electron acceptor for the enzyme is believed to be ubiquinone. This Patiria pectinifera (Starfish) protein is NADH-ubiquinone oxidoreductase chain 6 (ND6).